A 373-amino-acid polypeptide reads, in one-letter code: Dual-specificity RNA methyltransferase RlmN (373 aa).

Residue E94 is the Proton acceptor of the active site. In terms of domain architecture, Radical SAM core spans 100–339; sequence EEDRATLCVS…VIVRKTRGDD (240 aa). A disulfide bridge connects residues C107 and C344. 3 residues coordinate [4Fe-4S] cluster: C114, C118, and C121. Residues 168–169, S200, 222–224, and N301 contribute to the S-adenosyl-L-methionine site; these read GE and SIH. C344 (S-methylcysteine intermediate) is an active-site residue.

It belongs to the radical SAM superfamily. RlmN family. It depends on [4Fe-4S] cluster as a cofactor.

Its subcellular location is the cytoplasm. It catalyses the reaction adenosine(2503) in 23S rRNA + 2 reduced [2Fe-2S]-[ferredoxin] + 2 S-adenosyl-L-methionine = 2-methyladenosine(2503) in 23S rRNA + 5'-deoxyadenosine + L-methionine + 2 oxidized [2Fe-2S]-[ferredoxin] + S-adenosyl-L-homocysteine. The catalysed reaction is adenosine(37) in tRNA + 2 reduced [2Fe-2S]-[ferredoxin] + 2 S-adenosyl-L-methionine = 2-methyladenosine(37) in tRNA + 5'-deoxyadenosine + L-methionine + 2 oxidized [2Fe-2S]-[ferredoxin] + S-adenosyl-L-homocysteine. In terms of biological role, specifically methylates position 2 of adenine 2503 in 23S rRNA and position 2 of adenine 37 in tRNAs. m2A2503 modification seems to play a crucial role in the proofreading step occurring at the peptidyl transferase center and thus would serve to optimize ribosomal fidelity. The chain is Dual-specificity RNA methyltransferase RlmN from Shewanella sediminis (strain HAW-EB3).